The sequence spans 204 residues: MRVFIIKANEAHTANDFSLKDLPGTSGRIDLICRALNSAFHLSHSFRKNVRVYVTLLGPPDPPKSLRFEGPELKPKILNPDELSTAKIIGKALERGKDIKRKSTEEIKVLPGIYVSNMSFEDVIRVVIKRFPLYILEEDGKDITEVEFPKNNVAFVLGDHIGLSSEDLSFLESVGMKVSIGPKAYLTSHVIAYVNIYLDRLGIP.

Residues Leu-136 and Gly-158 each contribute to the S-adenosyl-L-methionine site.

It belongs to the methyltransferase superfamily. TrmY family. Homodimer.

The protein localises to the cytoplasm. The catalysed reaction is pseudouridine(54) in tRNA + S-adenosyl-L-methionine = N(1)-methylpseudouridine(54) in tRNA + S-adenosyl-L-homocysteine + H(+). Its function is as follows. Specifically catalyzes the N1-methylation of pseudouridine at position 54 (Psi54) in tRNAs. This chain is tRNA (pseudouridine(54)-N(1))-methyltransferase, found in Pyrococcus abyssi (strain GE5 / Orsay).